We begin with the raw amino-acid sequence, 136 residues long: Large ribosomal subunit protein uL16 (136 aa).

This sequence belongs to the universal ribosomal protein uL16 family. Part of the 50S ribosomal subunit.

In terms of biological role, binds 23S rRNA and is also seen to make contacts with the A and possibly P site tRNAs. The protein is Large ribosomal subunit protein uL16 of Serratia proteamaculans (strain 568).